A 231-amino-acid polypeptide reads, in one-letter code: 5'-methylthioadenosine/S-adenosylhomocysteine nucleosidase (231 aa).

The active-site Proton acceptor is Glu12. Substrate-binding positions include Gly78, Met153, and 174–175 (ME). Asp198 functions as the Proton donor in the catalytic mechanism.

It belongs to the PNP/UDP phosphorylase family. MtnN subfamily.

It catalyses the reaction S-adenosyl-L-homocysteine + H2O = S-(5-deoxy-D-ribos-5-yl)-L-homocysteine + adenine. It carries out the reaction S-methyl-5'-thioadenosine + H2O = 5-(methylsulfanyl)-D-ribose + adenine. The enzyme catalyses 5'-deoxyadenosine + H2O = 5-deoxy-D-ribose + adenine. The protein operates within amino-acid biosynthesis; L-methionine biosynthesis via salvage pathway; S-methyl-5-thio-alpha-D-ribose 1-phosphate from S-methyl-5'-thioadenosine (hydrolase route): step 1/2. Its function is as follows. Catalyzes the irreversible cleavage of the glycosidic bond in both 5'-methylthioadenosine (MTA) and S-adenosylhomocysteine (SAH/AdoHcy) to adenine and the corresponding thioribose, 5'-methylthioribose and S-ribosylhomocysteine, respectively. Also cleaves 5'-deoxyadenosine, a toxic by-product of radical S-adenosylmethionine (SAM) enzymes, into 5-deoxyribose and adenine. In Bacillus licheniformis (strain ATCC 14580 / DSM 13 / JCM 2505 / CCUG 7422 / NBRC 12200 / NCIMB 9375 / NCTC 10341 / NRRL NRS-1264 / Gibson 46), this protein is 5'-methylthioadenosine/S-adenosylhomocysteine nucleosidase.